The sequence spans 284 residues: Tropomyosin (284 aa).

Residues 1 to 273 (MDAIKKKMLA…KEKYKAISDE (273 aa)) adopt a coiled-coil conformation.

This sequence belongs to the tropomyosin family. Homodimer.

In terms of biological role, tropomyosin, in association with the troponin complex, plays a central role in the calcium dependent regulation of muscle contraction. This chain is Tropomyosin, found in Haliotis diversicolor (Abalone).